A 144-amino-acid chain; its full sequence is Flagellar assembly factor FliW (144 aa).

The protein belongs to the FliW family. As to quaternary structure, interacts with translational regulator CsrA and flagellin(s).

The protein localises to the cytoplasm. Its function is as follows. Acts as an anti-CsrA protein, binds CsrA and prevents it from repressing translation of its target genes, one of which is flagellin. Binds to flagellin and participates in the assembly of the flagellum. This Geobacillus sp. (strain WCH70) protein is Flagellar assembly factor FliW.